The chain runs to 666 residues: uncharacterized protein (666 aa).

This is an uncharacterized protein from Invertebrate iridescent virus 6 (IIV-6).